Reading from the N-terminus, the 220-residue chain is Guanylate kinase (220 aa).

The Guanylate kinase-like domain maps to 15–194 (GLMLVISSPS…ALDAVQSIVK (180 aa)). 22 to 29 (SPSGAGKS) is a binding site for ATP.

It belongs to the guanylate kinase family.

Its subcellular location is the cytoplasm. It catalyses the reaction GMP + ATP = GDP + ADP. Functionally, essential for recycling GMP and indirectly, cGMP. In Rhizobium johnstonii (strain DSM 114642 / LMG 32736 / 3841) (Rhizobium leguminosarum bv. viciae), this protein is Guanylate kinase.